The chain runs to 257 residues: Phosphonates import ATP-binding protein PhnC (257 aa).

The region spanning 2–246 (IEFRNVSKVY…KFAEIYGDVA (245 aa)) is the ABC transporter domain. 35–42 (GLSGAGKS) serves as a coordination point for ATP.

The protein belongs to the ABC transporter superfamily. Phosphonates importer (TC 3.A.1.9.1) family. In terms of assembly, the complex is composed of two ATP-binding proteins (PhnC), two transmembrane proteins (PhnE) and a solute-binding protein (PhnD).

It localises to the cell membrane. The enzyme catalyses phosphonate(out) + ATP + H2O = phosphonate(in) + ADP + phosphate + H(+). Functionally, part of the ABC transporter complex PhnCDE involved in phosphonates import. Responsible for energy coupling to the transport system. The chain is Phosphonates import ATP-binding protein PhnC from Bacillus cereus (strain ZK / E33L).